The primary structure comprises 368 residues: RNA polymerase sigma factor SigA (368 aa).

A compositionally biased stretch (basic and acidic residues) spans 71-83 (NEKDSSDTDDKIN). The segment at 71-90 (NEKDSSDTDDKINPNDLSAP) is disordered. The tract at residues 135-205 (LAEANLRLVV…TRAIADQART (71 aa)) is sigma-70 factor domain-2. An Interaction with polymerase core subunit RpoC motif is present at residues 159 to 162 (DLIQ). The sigma-70 factor domain-3 stretch occupies residues 214-290 (ETINKLIRVQ…DQEAQSPSDH (77 aa)). Residues 303–356 (VLDTLTDREENVLRLRFGLDDGRTRTLEEVGKVFGVTRERIRQIEAKALRKLRH) are sigma-70 factor domain-4. A DNA-binding region (H-T-H motif) is located at residues 329-348 (LEEVGKVFGVTRERIRQIEA).

This sequence belongs to the sigma-70 factor family. RpoD/SigA subfamily. Interacts transiently with the RNA polymerase catalytic core.

The protein resides in the cytoplasm. Functionally, sigma factors are initiation factors that promote the attachment of RNA polymerase to specific initiation sites and are then released. This sigma factor is the primary sigma factor during exponential growth. The polypeptide is RNA polymerase sigma factor SigA (Staphylococcus epidermidis (strain ATCC 35984 / DSM 28319 / BCRC 17069 / CCUG 31568 / BM 3577 / RP62A)).